The primary structure comprises 476 residues: Bifunctional protein HldE (476 aa).

The segment at 1–318 is ribokinase; that stretch reads MAQYSAEFKQ…ENAIHARPET (318 aa). 195 to 198 is an ATP binding site; that stretch reads NMSE. The active site involves Asp264. The cytidylyltransferase stretch occupies residues 344-476; it reads MTNGCFDILH…VIEKIKLLKD (133 aa).

This sequence in the N-terminal section; belongs to the carbohydrate kinase PfkB family. It in the C-terminal section; belongs to the cytidylyltransferase family. As to quaternary structure, homodimer.

It carries out the reaction D-glycero-beta-D-manno-heptose 7-phosphate + ATP = D-glycero-beta-D-manno-heptose 1,7-bisphosphate + ADP + H(+). It catalyses the reaction D-glycero-beta-D-manno-heptose 1-phosphate + ATP + H(+) = ADP-D-glycero-beta-D-manno-heptose + diphosphate. It participates in nucleotide-sugar biosynthesis; ADP-L-glycero-beta-D-manno-heptose biosynthesis; ADP-L-glycero-beta-D-manno-heptose from D-glycero-beta-D-manno-heptose 7-phosphate: step 1/4. The protein operates within nucleotide-sugar biosynthesis; ADP-L-glycero-beta-D-manno-heptose biosynthesis; ADP-L-glycero-beta-D-manno-heptose from D-glycero-beta-D-manno-heptose 7-phosphate: step 3/4. In terms of biological role, catalyzes the phosphorylation of D-glycero-D-manno-heptose 7-phosphate at the C-1 position to selectively form D-glycero-beta-D-manno-heptose-1,7-bisphosphate. Its function is as follows. Catalyzes the ADP transfer from ATP to D-glycero-beta-D-manno-heptose 1-phosphate, yielding ADP-D-glycero-beta-D-manno-heptose. This chain is Bifunctional protein HldE, found in Haemophilus influenzae (strain 86-028NP).